The chain runs to 325 residues: ADP-L-glycero-D-manno-heptose-6-epimerase (325 aa).

NADP(+)-binding positions include 10–11 (FI), 31–32 (DD), lysine 38, and 75–79 (EGACS). The active-site Proton acceptor is the tyrosine 139. NADP(+) is bound at residue lysine 143. Asparagine 167 serves as a coordination point for substrate. 2 residues coordinate NADP(+): valine 168 and lysine 176. Residue lysine 176 is the Proton acceptor of the active site. Residues serine 178, histidine 185, 199–202 (FEGS), arginine 212, and tyrosine 285 contribute to the substrate site.

The protein belongs to the NAD(P)-dependent epimerase/dehydratase family. HldD subfamily. In terms of assembly, homopentamer. It depends on NADP(+) as a cofactor.

It catalyses the reaction ADP-D-glycero-beta-D-manno-heptose = ADP-L-glycero-beta-D-manno-heptose. It functions in the pathway nucleotide-sugar biosynthesis; ADP-L-glycero-beta-D-manno-heptose biosynthesis; ADP-L-glycero-beta-D-manno-heptose from D-glycero-beta-D-manno-heptose 7-phosphate: step 4/4. Functionally, catalyzes the interconversion between ADP-D-glycero-beta-D-manno-heptose and ADP-L-glycero-beta-D-manno-heptose via an epimerization at carbon 6 of the heptose. This is ADP-L-glycero-D-manno-heptose-6-epimerase from Azoarcus sp. (strain BH72).